Here is a 299-residue protein sequence, read N- to C-terminus: Bifunctional protein FolD (299 aa).

NADP(+)-binding positions include 168–170, Ser-193, and Ile-234; that span reads GRS.

It belongs to the tetrahydrofolate dehydrogenase/cyclohydrolase family. As to quaternary structure, homodimer.

The enzyme catalyses (6R)-5,10-methylene-5,6,7,8-tetrahydrofolate + NADP(+) = (6R)-5,10-methenyltetrahydrofolate + NADPH. The catalysed reaction is (6R)-5,10-methenyltetrahydrofolate + H2O = (6R)-10-formyltetrahydrofolate + H(+). The protein operates within one-carbon metabolism; tetrahydrofolate interconversion. Functionally, catalyzes the oxidation of 5,10-methylenetetrahydrofolate to 5,10-methenyltetrahydrofolate and then the hydrolysis of 5,10-methenyltetrahydrofolate to 10-formyltetrahydrofolate. This chain is Bifunctional protein FolD, found in Rhizobium johnstonii (strain DSM 114642 / LMG 32736 / 3841) (Rhizobium leguminosarum bv. viciae).